The primary structure comprises 342 residues: Glyceraldehyde-3-phosphate dehydrogenase (342 aa).

Residues 12 to 13 (RI), aspartate 34, lysine 78, and threonine 120 each bind NAD(+). D-glyceraldehyde 3-phosphate-binding positions include 151-153 (SCT) and threonine 182. The active-site Nucleophile is cysteine 152. Residue asparagine 183 coordinates NAD(+). D-glyceraldehyde 3-phosphate-binding positions include arginine 197, 210–211 (TG), and arginine 233. Asparagine 322 serves as a coordination point for NAD(+).

This sequence belongs to the glyceraldehyde-3-phosphate dehydrogenase family. As to quaternary structure, homotetramer.

The protein localises to the cytoplasm. It catalyses the reaction D-glyceraldehyde 3-phosphate + phosphate + NAD(+) = (2R)-3-phospho-glyceroyl phosphate + NADH + H(+). Its pathway is carbohydrate degradation; glycolysis; pyruvate from D-glyceraldehyde 3-phosphate: step 1/5. Its function is as follows. Catalyzes the oxidative phosphorylation of glyceraldehyde 3-phosphate (G3P) to 1,3-bisphosphoglycerate (BPG) using the cofactor NAD. The first reaction step involves the formation of a hemiacetal intermediate between G3P and a cysteine residue, and this hemiacetal intermediate is then oxidized to a thioester, with concomitant reduction of NAD to NADH. The reduced NADH is then exchanged with the second NAD, and the thioester is attacked by a nucleophilic inorganic phosphate to produce BPG. The polypeptide is Glyceraldehyde-3-phosphate dehydrogenase (gap) (Aquifex aeolicus (strain VF5)).